Here is an 82-residue protein sequence, read N- to C-terminus: Cytochrome b559 subunit alpha (82 aa).

Residues 22–36 (VIHAITLPSIFLAGF) form a helical membrane-spanning segment. Position 24 (His24) interacts with heme.

Belongs to the PsbE/PsbF family. In terms of assembly, heterodimer of an alpha subunit and a beta subunit. PSII is composed of 1 copy each of membrane proteins PsbA, PsbB, PsbC, PsbD, PsbE, PsbF, PsbH, PsbI, PsbJ, PsbK, PsbL, PsbM, PsbT, PsbX, PsbY, PsbZ, Psb30/Ycf12, peripheral proteins PsbO, CyanoQ (PsbQ), PsbU, PsbV and a large number of cofactors. It forms dimeric complexes. Requires heme b as cofactor.

The protein resides in the cellular thylakoid membrane. In terms of biological role, this b-type cytochrome is tightly associated with the reaction center of photosystem II (PSII). PSII is a light-driven water:plastoquinone oxidoreductase that uses light energy to abstract electrons from H(2)O, generating O(2) and a proton gradient subsequently used for ATP formation. It consists of a core antenna complex that captures photons, and an electron transfer chain that converts photonic excitation into a charge separation. The protein is Cytochrome b559 subunit alpha of Synechococcus sp. (strain CC9311).